The primary structure comprises 232 residues: Ribose-5-phosphate isomerase A (232 aa).

Substrate-binding positions include 29-32, 84-87, and 97-100; these read TGST, DGAD, and KGGG. Glu106 (proton acceptor) is an active-site residue. Lys124 contacts substrate.

This sequence belongs to the ribose 5-phosphate isomerase family. In terms of assembly, homodimer.

The enzyme catalyses aldehydo-D-ribose 5-phosphate = D-ribulose 5-phosphate. It functions in the pathway carbohydrate degradation; pentose phosphate pathway; D-ribose 5-phosphate from D-ribulose 5-phosphate (non-oxidative stage): step 1/1. Catalyzes the reversible conversion of ribose-5-phosphate to ribulose 5-phosphate. This Brucella suis biovar 1 (strain 1330) protein is Ribose-5-phosphate isomerase A.